The sequence spans 965 residues: Inner tegument protein (965 aa).

The interaction with large tegument protein stretch occupies residues tryptophan 489 to phenylalanine 965.

Belongs to the herpesviridae inner tegument protein family. Interacts (via C-terminus) with the large tegument protein/LTP (via N-terminus).

The protein resides in the virion tegument. It is found in the host cytoplasm. Its subcellular location is the host nucleus. The protein localises to the host Golgi apparatus. It localises to the host trans-Golgi network. Functionally, plays an essential role in cytoplasmic secondary envelopment during viral egress. Interacts with the capsid via the large tegument protein/LTP and participates in its transport to the host trans-Golgi network (TGN) where secondary envelopment occurs. Modulates tegumentation and capsid accumulation at the viral assembly complex. The sequence is that of Inner tegument protein (63) from Equine herpesvirus 2 (strain 86/87) (EHV-2).